Here is a 61-residue protein sequence, read N- to C-terminus: L-amino-acid oxidase (61 aa).

43 to 44 provides a ligand contact to FAD; sequence MA.

The protein belongs to the flavin monoamine oxidase family. FIG1 subfamily. Homodimer; non-covalently linked. The cofactor is FAD. N-glycosylated. As to expression, expressed by the venom gland.

It localises to the secreted. The catalysed reaction is an L-alpha-amino acid + O2 + H2O = a 2-oxocarboxylate + H2O2 + NH4(+). It catalyses the reaction L-leucine + O2 + H2O = 4-methyl-2-oxopentanoate + H2O2 + NH4(+). Catalyzes an oxidative deamination of predominantly hydrophobic and aromatic L-amino acids, thus producing hydrogen peroxide that may contribute to the diverse toxic effects of this enzyme. Shows activity on L-Leu. Exhibits diverse biological activities, such as apoptosis, antibacterial activities against both Gram-negative and Gram-positive bacteria and antiparasitic activities, as well as induction of platelet aggregation. Effects of snake L-amino oxidases on platelets are controversial, since they either induce aggregation or inhibit agonist-induced aggregation. These different effects are probably due to different experimental conditions. This protein may also induce hemorrhage, hemolysis, and edema. The protein is L-amino-acid oxidase of Crotalus durissus cascavella (Northeastern Brazilian rattlesnake).